The chain runs to 149 residues: Deoxyuridine 5'-triphosphate nucleotidohydrolase (149 aa).

Residues 68–70 (RSG), Asn-81, and 85–87 (LID) each bind substrate.

The protein belongs to the dUTPase family. Requires Mg(2+) as cofactor.

It carries out the reaction dUTP + H2O = dUMP + diphosphate + H(+). The protein operates within pyrimidine metabolism; dUMP biosynthesis; dUMP from dCTP (dUTP route): step 2/2. Functionally, this enzyme is involved in nucleotide metabolism: it produces dUMP, the immediate precursor of thymidine nucleotides and it decreases the intracellular concentration of dUTP so that uracil cannot be incorporated into DNA. The protein is Deoxyuridine 5'-triphosphate nucleotidohydrolase of Laribacter hongkongensis (strain HLHK9).